We begin with the raw amino-acid sequence, 288 residues long: Solute carrier family 25 member 47-B (288 aa).

Solcar repeat units follow at residues 1-83 (MHLA…ILQF), 99-191 (AHIF…ICEI), and 199-286 (PGWP…VVRL). Helical transmembrane passes span 3–23 (LADFLAGSVGGAFGVAVGYPL), 58–75 (GMSMPISTVSISSSLVFG), 101–121 (IFLAGFTGGVTQVLVMAPADI), 175–195 (GPSFATYFLTYNTICEILTTE), 199–219 (PGWPVVLLAGGVSGMCGWAVG), and 257–277 (VLFRGLTVNCIRAFPVNMSVF).

This sequence belongs to the mitochondrial carrier (TC 2.A.29) family.

The protein resides in the mitochondrion inner membrane. The protein is Solute carrier family 25 member 47-B (slc25a47b) of Danio rerio (Zebrafish).